Here is a 547-residue protein sequence, read N- to C-terminus: Chaperonin GroEL (547 aa).

Residues 30–33 (TLGP), Lys-51, 87–91 (DGTTT), Gly-415, 479–481 (NAA), and Asp-495 each bind ATP.

The protein belongs to the chaperonin (HSP60) family. As to quaternary structure, forms a cylinder of 14 subunits composed of two heptameric rings stacked back-to-back. Interacts with the co-chaperonin GroES.

It localises to the cytoplasm. It carries out the reaction ATP + H2O + a folded polypeptide = ADP + phosphate + an unfolded polypeptide.. In terms of biological role, together with its co-chaperonin GroES, plays an essential role in assisting protein folding. The GroEL-GroES system forms a nano-cage that allows encapsulation of the non-native substrate proteins and provides a physical environment optimized to promote and accelerate protein folding. The sequence is that of Chaperonin GroEL from Pseudomonas putida (strain GB-1).